The primary structure comprises 344 residues: Zinc transporter 9 (344 aa).

The helical transmembrane segment at 1 to 21 (MASILISGAAGVSIPLVGTLL) threads the bilayer. Over 22-30 (PLNGGLMRG) the chain is Cytoplasmic. Residues 31–51 (AKAFAAGVILATGFVHMLSGG) traverse the membrane as a helical segment. At 52–72 (SKALSDPCLPEFPWKMFPFPE) the chain is on the extracellular side. A helical transmembrane segment spans residues 73-93 (FFAMVAALLTLLADFMITGYY). Residues 94 to 188 (ERKQEKMMNQ…DVGLDSGVRH (95 aa)) are Cytoplasmic-facing. The chain crosses the membrane as a helical span at residues 189 to 209 (VVVSQILEMGIVSHSIIIGIS). Topologically, residues 210–221 (LGVSHSPCTIRP) are extracellular. Residues 222 to 242 (LLLALSFHQFFEGFALGGCVA) traverse the membrane as a helical segment. Topologically, residues 243-251 (EARLTPRGS) are cytoplasmic. A helical transmembrane segment spans residues 252–272 (AMMAFFFAITTPIGVAVGTAI). At 273–291 (ASSYNSYSVAALVAEGVLD) the chain is on the extracellular side. Residues 292 to 312 (SLSAGILVYMALVDLIAADFL) traverse the membrane as a helical segment. At 313 to 323 (SKKMSVDFRVQ) the chain is on the cytoplasmic side. The chain crosses the membrane as a helical span at residues 324-344 (VVSYCFLFLGAGMMSALAIWA).

This sequence belongs to the ZIP transporter (TC 2.A.5) family.

The protein localises to the cell membrane. In terms of biological role, zinc transporter involved in zinc uptake in roots. Targeted by BZIP19 transcription factor in response to zinc-deficient conditions. The polypeptide is Zinc transporter 9 (ZIP9) (Arabidopsis thaliana (Mouse-ear cress)).